The chain runs to 235 residues: Ribosomal RNA-processing protein 17 (235 aa).

Positions 49–110 (QRQKKAQEFI…AKNDKTEDLQ (62 aa)) form a coiled coil. Basic and acidic residues predominate over residues 99-108 (EDAKNDKTED). 2 disordered regions span residues 99–138 (EDAK…SVKP) and 209–235 (RVKK…KRRR). Phosphoserine is present on residues Ser-113, Ser-116, and Ser-122. A compositionally biased stretch (basic and acidic residues) spans 217–235 (TKNERRINQRKANDNKRRR).

The protein belongs to the RRP17 family.

Its subcellular location is the nucleus. The protein resides in the nucleolus. In terms of biological role, essential protein involved in ribosomal RNA processing. The chain is Ribosomal RNA-processing protein 17 (RRP17) from Saccharomyces cerevisiae (strain ATCC 204508 / S288c) (Baker's yeast).